We begin with the raw amino-acid sequence, 188 residues long: Elongation factor P-like protein (188 aa).

It belongs to the elongation factor P family.

The sequence is that of Elongation factor P-like protein from Vibrio vulnificus (strain CMCP6).